Consider the following 198-residue polypeptide: Probable molybdenum cofactor guanylyltransferase (198 aa).

Residues 9 to 11, Lys-22, Asp-66, and Asp-95 each bind GTP; that span reads LAG. Residue Asp-95 participates in Mg(2+) binding.

The protein belongs to the MobA family. Mg(2+) is required as a cofactor.

Its subcellular location is the cytoplasm. It catalyses the reaction Mo-molybdopterin + GTP + H(+) = Mo-molybdopterin guanine dinucleotide + diphosphate. In terms of biological role, transfers a GMP moiety from GTP to Mo-molybdopterin (Mo-MPT) cofactor (Moco or molybdenum cofactor) to form Mo-molybdopterin guanine dinucleotide (Mo-MGD) cofactor. This Clostridium perfringens (strain 13 / Type A) protein is Probable molybdenum cofactor guanylyltransferase.